Here is a 216-residue protein sequence, read N- to C-terminus: RNA chaperone ProQ (216 aa).

Basic and acidic residues predominate over residues 105-115 (ESKAKVAEKRK). The segment at 105–159 (ESKAKVAEKRKAQNAAKPGAKKSYKSKTVPAFKSSPKGTNQDNVKPKAKLPPPEK) is disordered.

This sequence belongs to the ProQ family.

It is found in the cytoplasm. Its function is as follows. RNA chaperone with significant RNA binding, RNA strand exchange and RNA duplexing activities. This chain is RNA chaperone ProQ, found in Pseudoalteromonas atlantica (strain T6c / ATCC BAA-1087).